Here is a 207-residue protein sequence, read N- to C-terminus: Histone H1 (207 aa).

Residues 1–15 (MAEVAPAPAAAAPAK) show a composition bias toward low complexity. Disordered regions lie at residues 1-28 (MAEV…PKKA) and 105-207 (EAKK…PKKK). An N-acetylalanine modification is found at Ala2. Residues 16–27 (APKKKAAAKPKK) show a composition bias toward basic residues. The H15 domain occupies 28–101 (AGPSVGELIV…GASGSFKLNK (74 aa)). Basic residues-rich tracts occupy residues 117 to 168 (KAKK…KVKK) and 175 to 207 (KAAK…PKKK).

It belongs to the histone H1/H5 family. In terms of tissue distribution, oncorhyncin II is expressed in skin.

Its subcellular location is the nucleus. It localises to the chromosome. The protein resides in the secreted. In terms of biological role, histones H1 are necessary for the condensation of nucleosome chains into higher-order structures. Functionally, oncorhyncin II has antibacterial activity against Gram-positive and Gram-negative bacteria at submicromolar concentrations. Potentially important role in mucosal defense. The sequence is that of Histone H1 from Oncorhynchus mykiss (Rainbow trout).